Reading from the N-terminus, the 644-residue chain is Exoribonuclease 2 (644 aa).

The 328-residue stretch at 189-516 (REDLTALDFV…NHRLLKAVIK (328 aa)) folds into the RNB domain. In terms of domain architecture, S1 motif spans 561 to 643 (DTRFAAEIVD…ETRSIIARPV (83 aa)).

It belongs to the RNR ribonuclease family. RNase II subfamily.

Its subcellular location is the cytoplasm. The catalysed reaction is Exonucleolytic cleavage in the 3'- to 5'-direction to yield nucleoside 5'-phosphates.. In terms of biological role, involved in mRNA degradation. Hydrolyzes single-stranded polyribonucleotides processively in the 3' to 5' direction. In Escherichia coli O127:H6 (strain E2348/69 / EPEC), this protein is Exoribonuclease 2.